Reading from the N-terminus, the 509-residue chain is Putative cytochrome P450 CYP13A8 (509 aa).

C455 provides a ligand contact to heme.

Belongs to the cytochrome P450 family. The cofactor is heme.

Cytochromes P450 are a group of heme-thiolate monooxygenases. They oxidize a variety of structurally unrelated compounds, including steroids, fatty acids, and xenobiotics. This chain is Putative cytochrome P450 CYP13A8 (cyp-13A8), found in Caenorhabditis elegans.